Here is an 808-residue protein sequence, read N- to C-terminus: Sucrose synthase (808 aa).

Residues 271 to 753 (MLFRIALISP…GIERVYSTYT (483 aa)) form a GT-B glycosyltransferase region.

Belongs to the glycosyltransferase 1 family. In terms of assembly, probably a homotetramer.

It carries out the reaction an NDP-alpha-D-glucose + D-fructose = a ribonucleoside 5'-diphosphate + sucrose + H(+). It catalyses the reaction ADP-alpha-D-glucose + D-fructose = sucrose + ADP + H(+). Catalyzes the reversible conversion of sucrose and a nucleotide disphosphate (NDP) into fructose and NDP-glucose; although the reaction is freely reversible in vitro, the physiological reaction seems to be sucrose cleavage. Unlike characterized plant enzymes prefers ADP as a cosubstrate, whereas plants prefer UDP. Its preference for ADP over UDP suggests it may directly link sucrose and glycogen metabolism. The sequence is that of Sucrose synthase from Thermosynechococcus vestitus (strain NIES-2133 / IAM M-273 / BP-1).